The sequence spans 331 residues: Cytochrome bo(3) ubiquinol oxidase subunit 2 (331 aa).

Residues 1-23 (MTKANPFAALKWLSLAPALLLGG) form the signal peptide. A lipid anchor (N-palmitoyl cysteine) is attached at Cys-24. Cys-24 is lipidated: S-diacylglycerol cysteine. Topologically, residues 24–41 (CDMTLFNPKGQVGMDERT) are periplasmic. Residues 42-62 (LIITATLLMLIVVIPVIVMTL) form a helical membrane-spanning segment. Topologically, residues 63 to 86 (AFAWKYRASNTQAEYKPDWHHSNR) are cytoplasmic. Residues 87 to 107 (IEAVVWLVPCVIIAILGWITW) traverse the membrane as a helical segment. At 108 to 331 (ESTHKLDPYR…DMHMQPSTQE (224 aa)) the chain is on the periplasmic side.

The protein belongs to the cytochrome c oxidase subunit 2 family. In terms of assembly, heterooctamer of two A chains, two B chains, two C chains and two D chains.

Its subcellular location is the cell inner membrane. Cytochrome bo(3) ubiquinol terminal oxidase is the component of the aerobic respiratory chain of E.coli that predominates when cells are grown at high aeration. Has proton pump activity across the membrane in addition to electron transfer, pumping 2 protons/electron. This chain is Cytochrome bo(3) ubiquinol oxidase subunit 2 (cyoA), found in Pseudomonas aeruginosa (strain ATCC 15692 / DSM 22644 / CIP 104116 / JCM 14847 / LMG 12228 / 1C / PRS 101 / PAO1).